We begin with the raw amino-acid sequence, 557 residues long: MVLSDIEIANSVTMEPISKVADQLGIDKEALCLYGKYKAKIDARQLVALKNKPDGKLILVTAISPTPAGEGKTTTSVGLVDALSAIGKKAVIALREPSLGPVFGVKGGAAGGGHAQVVPMEDINLHFTGDFHAIGVANNLLAALIDNHIHHGNSLGIDSRRITWKRVVDMNDRQLRHIVDGLQGKVNGIPREDGYDITVASEIMAILCLSENISDLKARLEKIIIGYNYQGEPVTAKDLKAGGALAALLKDAIHPNLVQTLEHTPALIHGGPFANIAHGCNSVLATKLALKYGDYAVTEAGFGADLGAEKFIDIKCRMSGLRPAAVVLVATIRALKMHGGVPKADLATENVQAVVDGLPNLDKHLANIQDVYGLPVVVAINKFPLDTDAELQAVYDACDKRGVDVVISDVWANGGAGGRELAEKVVTLAEQDNQFRFVYEEDDSIETKLTKIVTKVYGGKGINLSSAAKRELADLERLGFGNYPICMAKTQYSFSDDAKKLGAPTDFTVTISNLKVSAGAGFIVALTGAIMTMPGLPKVPASETIDIDEEGNITGLF.

66-73 serves as a coordination point for ATP; the sequence is TPAGEGKT.

Belongs to the formate--tetrahydrofolate ligase family.

The enzyme catalyses (6S)-5,6,7,8-tetrahydrofolate + formate + ATP = (6R)-10-formyltetrahydrofolate + ADP + phosphate. It functions in the pathway one-carbon metabolism; tetrahydrofolate interconversion. This chain is Formate--tetrahydrofolate ligase 2, found in Streptococcus pyogenes serotype M1.